A 191-amino-acid polypeptide reads, in one-letter code: CASP-like protein 4C2 (191 aa).

Topologically, residues 1–29 are cytoplasmic; it reads MEAADSATNNSKDTHFYGKSRAENRRRSD. A helical membrane pass occupies residues 30–50; it reads AMLLLFRALTFSFSLAAVVVM. At 51-72 the chain is on the extracellular side; that stretch reads GTNRYRINPQLKVSWYDFEPYR. The chain crosses the membrane as a helical span at residues 73–93; that stretch reads YVLAVNAIICIYSFVETWLAV. The Cytoplasmic portion of the chain corresponds to 94–116; it reads YTYLQGSYLLPEIFQVWFDYGHD. A helical membrane pass occupies residues 117-137; that stretch reads QGFAYLLFSANSAGVAMAQLL. Over 138–161 the chain is Extracellular; sequence QSGNTLIHGAYHCTEAGGYCTQAR. Residues 162-182 traverse the membrane as a helical segment; the sequence is VSIALGFVAFLFLALSSLLTG. Over 183–191 the chain is Cytoplasmic; the sequence is LRVARWYLR.

The protein belongs to the Casparian strip membrane proteins (CASP) family. Homodimer and heterodimers.

Its subcellular location is the cell membrane. The polypeptide is CASP-like protein 4C2 (Physcomitrium patens (Spreading-leaved earth moss)).